Here is a 158-residue protein sequence, read N- to C-terminus: Probable cyclic pyranopterin monophosphate synthase (158 aa).

Residues Met78–His80 and Met114–Glu115 contribute to the substrate site. Asp129 is an active-site residue.

The protein belongs to the MoaC family. As to quaternary structure, homohexamer; trimer of dimers.

The catalysed reaction is (8S)-3',8-cyclo-7,8-dihydroguanosine 5'-triphosphate = cyclic pyranopterin phosphate + diphosphate. It functions in the pathway cofactor biosynthesis; molybdopterin biosynthesis. In terms of biological role, catalyzes the conversion of (8S)-3',8-cyclo-7,8-dihydroguanosine 5'-triphosphate to cyclic pyranopterin monophosphate (cPMP). In Methanosarcina acetivorans (strain ATCC 35395 / DSM 2834 / JCM 12185 / C2A), this protein is Probable cyclic pyranopterin monophosphate synthase.